Reading from the N-terminus, the 117-residue chain is Photosystem II reaction center Psb28 protein (117 aa).

The protein belongs to the Psb28 family. As to quaternary structure, part of the photosystem II complex.

It is found in the cellular thylakoid membrane. This is Photosystem II reaction center Psb28 protein from Prochlorococcus marinus (strain AS9601).